Reading from the N-terminus, the 331-residue chain is Ketol-acid reductoisomerase (NADP(+)) (331 aa).

In terms of domain architecture, KARI N-terminal Rossmann spans 2-182 (AQLFYDSDAD…GGTRAGILET (181 aa)). Residues 25-28 (YGSQ), serine 51, serine 53, and 83-86 (DEFQ) each bind NADP(+). Residue histidine 108 is part of the active site. Glycine 134 contributes to the NADP(+) binding site. Positions 183 to 328 (NFKEETETDL…KGLRAMFSWL (146 aa)) constitute a KARI C-terminal knotted domain. Positions 191, 195, 227, and 231 each coordinate Mg(2+). Serine 252 lines the substrate pocket.

This sequence belongs to the ketol-acid reductoisomerase family. Mg(2+) serves as cofactor.

It carries out the reaction (2R)-2,3-dihydroxy-3-methylbutanoate + NADP(+) = (2S)-2-acetolactate + NADPH + H(+). The catalysed reaction is (2R,3R)-2,3-dihydroxy-3-methylpentanoate + NADP(+) = (S)-2-ethyl-2-hydroxy-3-oxobutanoate + NADPH + H(+). It functions in the pathway amino-acid biosynthesis; L-isoleucine biosynthesis; L-isoleucine from 2-oxobutanoate: step 2/4. The protein operates within amino-acid biosynthesis; L-valine biosynthesis; L-valine from pyruvate: step 2/4. Functionally, involved in the biosynthesis of branched-chain amino acids (BCAA). Catalyzes an alkyl-migration followed by a ketol-acid reduction of (S)-2-acetolactate (S2AL) to yield (R)-2,3-dihydroxy-isovalerate. In the isomerase reaction, S2AL is rearranged via a Mg-dependent methyl migration to produce 3-hydroxy-3-methyl-2-ketobutyrate (HMKB). In the reductase reaction, this 2-ketoacid undergoes a metal-dependent reduction by NADPH to yield (R)-2,3-dihydroxy-isovalerate. The chain is Ketol-acid reductoisomerase (NADP(+)) from Prochlorococcus marinus (strain MIT 9303).